Here is a 363-residue protein sequence, read N- to C-terminus: 3-isopropylmalate dehydrogenase (363 aa).

78-91 is an NAD(+) binding site; the sequence is GPKWEHLPPDQQPE. Residues Arg-99, Arg-109, Arg-138, and Asp-227 each contribute to the substrate site. Mg(2+)-binding residues include Asp-227, Asp-251, and Asp-255. 285-297 serves as a coordination point for NAD(+); the sequence is GSAPDIAGKNIAN.

The protein belongs to the isocitrate and isopropylmalate dehydrogenases family. LeuB type 1 subfamily. In terms of assembly, homodimer. Requires Mg(2+) as cofactor. It depends on Mn(2+) as a cofactor.

The protein resides in the cytoplasm. It carries out the reaction (2R,3S)-3-isopropylmalate + NAD(+) = 4-methyl-2-oxopentanoate + CO2 + NADH. Its pathway is amino-acid biosynthesis; L-leucine biosynthesis; L-leucine from 3-methyl-2-oxobutanoate: step 3/4. With respect to regulation, requires K(+) ions for optimum activity. Catalyzes the oxidation of 3-carboxy-2-hydroxy-4-methylpentanoate (3-isopropylmalate) to 3-carboxy-4-methyl-2-oxopentanoate. The product decarboxylates to 4-methyl-2 oxopentanoate. The sequence is that of 3-isopropylmalate dehydrogenase from Escherichia coli (strain K12).